Reading from the N-terminus, the 193-residue chain is ATP-dependent Clp protease proteolytic subunit (193 aa).

S97 serves as the catalytic Nucleophile. The active site involves H122.

Belongs to the peptidase S14 family. In terms of assembly, fourteen ClpP subunits assemble into 2 heptameric rings which stack back to back to give a disk-like structure with a central cavity, resembling the structure of eukaryotic proteasomes.

Its subcellular location is the cytoplasm. The catalysed reaction is Hydrolysis of proteins to small peptides in the presence of ATP and magnesium. alpha-casein is the usual test substrate. In the absence of ATP, only oligopeptides shorter than five residues are hydrolyzed (such as succinyl-Leu-Tyr-|-NHMec, and Leu-Tyr-Leu-|-Tyr-Trp, in which cleavage of the -Tyr-|-Leu- and -Tyr-|-Trp bonds also occurs).. Cleaves peptides in various proteins in a process that requires ATP hydrolysis. Has a chymotrypsin-like activity. Plays a major role in the degradation of misfolded proteins. This is ATP-dependent Clp protease proteolytic subunit from Fusobacterium nucleatum subsp. nucleatum (strain ATCC 25586 / DSM 15643 / BCRC 10681 / CIP 101130 / JCM 8532 / KCTC 2640 / LMG 13131 / VPI 4355).